The sequence spans 448 residues: Squalene synthase ERG9 (448 aa).

The helical transmembrane segment at 428–448 threads the bilayer; sequence CNVVLFGIGALILSLIYFVLY.

This sequence belongs to the phytoene/squalene synthase family. The cofactor is Mg(2+).

It is found in the endoplasmic reticulum membrane. It localises to the microsome. The enzyme catalyses 2 (2E,6E)-farnesyl diphosphate + NADPH + H(+) = squalene + 2 diphosphate + NADP(+). It carries out the reaction 2 (2E,6E)-farnesyl diphosphate + NADH + H(+) = squalene + 2 diphosphate + NAD(+). Its pathway is terpene metabolism; lanosterol biosynthesis; lanosterol from farnesyl diphosphate: step 1/3. Its function is as follows. Squalene synthase; part of the third module of ergosterol biosynthesis pathway that includes the late steps of the pathway. ERG9 produces squalene from 2 farnesyl pyrophosphate moieties. The third module or late pathway involves the ergosterol synthesis itself through consecutive reactions that mainly occur in the endoplasmic reticulum (ER) membrane. Firstly, the squalene synthase ERG9 catalyzes the condensation of 2 farnesyl pyrophosphate moieties to form squalene, which is the precursor of all steroids. Squalene synthase is crucial for balancing the incorporation of farnesyl diphosphate (FPP) into sterol and nonsterol isoprene synthesis. Secondly, the squalene epoxidase ERG1 catalyzes the stereospecific oxidation of squalene to (S)-2,3-epoxysqualene, which is considered to be a rate-limiting enzyme in steroid biosynthesis. Then, the lanosterol synthase ERG7 catalyzes the cyclization of (S)-2,3 oxidosqualene to lanosterol, a reaction that forms the sterol core. In the next steps, lanosterol is transformed to zymosterol through a complex process involving various demethylation, reduction and desaturation reactions. The lanosterol 14-alpha-demethylase ERG11 (also known as CYP51) catalyzes C14-demethylation of lanosterol to produce 4,4'-dimethyl cholesta-8,14,24-triene-3-beta-ol, which is critical for ergosterol biosynthesis. The C-14 reductase ERG24 reduces the C14=C15 double bond of 4,4-dimethyl-cholesta-8,14,24-trienol to produce 4,4-dimethyl-cholesta-8,24-dienol. 4,4-dimethyl-cholesta-8,24-dienol is substrate of the C-4 demethylation complex ERG25-ERG26-ERG27 in which ERG25 catalyzes the three-step monooxygenation required for the demethylation of 4,4-dimethyl and 4alpha-methylsterols, ERG26 catalyzes the oxidative decarboxylation that results in a reduction of the 3-beta-hydroxy group at the C-3 carbon to an oxo group, and ERG27 is responsible for the reduction of the keto group on the C-3. ERG28 has a role as a scaffold to help anchor ERG25, ERG26 and ERG27 to the endoplasmic reticulum and ERG29 regulates the activity of the iron-containing C4-methylsterol oxidase ERG25. Then, the sterol 24-C-methyltransferase ERG6 catalyzes the methyl transfer from S-adenosyl-methionine to the C-24 of zymosterol to form fecosterol. The C-8 sterol isomerase ERG2 catalyzes the reaction which results in unsaturation at C-7 in the B ring of sterols and thus converts fecosterol to episterol. The sterol-C5-desaturase ERG3 then catalyzes the introduction of a C-5 double bond in the B ring to produce 5-dehydroepisterol. The C-22 sterol desaturase ERG5 further converts 5-dehydroepisterol into ergosta-5,7,22,24(28)-tetraen-3beta-ol by forming the C-22(23) double bond in the sterol side chain. Finally, ergosta-5,7,22,24(28)-tetraen-3beta-ol is substrate of the C-24(28) sterol reductase ERG4 to produce ergosterol. This Candida albicans (strain SC5314 / ATCC MYA-2876) (Yeast) protein is Squalene synthase ERG9.